The sequence spans 272 residues: Transcription factor PU.1 (272 aa).

The disordered stretch occupies residues 126–165 (SPAHQQSSDEEEGERQSPPLEVSDGEADGLEPGPGLLHGE). Phosphoserine occurs at positions 142 and 148. The segment covering 155-165 (LEPGPGLLHGE) has biased composition (low complexity). A DNA-binding region (ETS) is located at residues 172–255 (IRLYQFLLDL…VKKKLTYQFS (84 aa)). Positions 219, 232, 235, and 245 each coordinate DNA.

The protein belongs to the ETS family. Binds DNA as a monomer. Can form homomers. Directly interacts with CEBPD/NF-IL6-beta; this interaction does not affect DNA-binding properties of each partner. Interacts with NONO/p54(nrb). Interacts with RUNX1/AML1. Interacts with GFI1; the interaction represses SPI1 transcriptional activity, hence blocks SPI1-induced macrophage differentiation of myeloid progenitor cells. Interacts with CEBPE. Interacts with IRF4/Pip and IRF8. Interacts with JUN. Interacts with RB1. Interacts with TBP. As to expression, expressed in spleen, thymus and bone-marrow macrophages.

It localises to the nucleus. With respect to regulation, transcriptional activity at macrophage-specific genes is inhibited by interaction with GFI1, which results in inhibition of SPI1-induced macrophage differentiation of myeloid progenitor cells, but not that of the granulocyte lineage. Functionally, pioneer transcription factor, which controls hematopoietic cell fate by decompacting stem cell heterochromatin and allowing other transcription factors to enter otherwise inaccessible genomic sites. Once in open chromatin, can directly control gene expression by binding genetic regulatory elements and can also more broadly influence transcription by recruiting transcription factors, such as interferon regulatory factors (IRFs), to otherwise inaccessible genomic regions. Transcriptionally activates genes important for myeloid and lymphoid lineages, such as CSF1R. Transcriptional activation from certain promoters, possibly containing low affinity binding sites, is achieved cooperatively with other transcription factors. FCER1A transactivation is achieved in cooperation with GATA1. May be particularly important for the pro- to pre-B cell transition. Binds (via the ETS domain) onto the purine-rich DNA core sequence 5'-GAGGAA-3', also known as the PU-box. In vitro can bind RNA and interfere with pre-mRNA splicing. In Mus musculus (Mouse), this protein is Transcription factor PU.1 (Spi1).